Consider the following 219-residue polypeptide: MGKTKNKSDWQIFLEDYRFYFETDFDWVTYLNNCLNSYPDFDIIKFIKKYGPECEKSFLSWQSKAKSDVYSELTNKIKKQQFSEQLIYQLVQLDALRTNYLIGSLFSDNKTQRKLLKRSWKNAKKEGYTKQEWLMILVGLPFEKGAYHKQLYDHSRQEILDLTEVIKKLYLKTETNNDKLEFAATTSKTTAQLTKTMPLNSSDLDKDLMEFSGEKWGDN.

This is an uncharacterized protein from Mycoplasma genitalium (strain ATCC 33530 / DSM 19775 / NCTC 10195 / G37) (Mycoplasmoides genitalium).